The primary structure comprises 574 residues: Proline--tRNA ligase (574 aa).

Belongs to the class-II aminoacyl-tRNA synthetase family. ProS type 1 subfamily. In terms of assembly, homodimer.

The protein resides in the cytoplasm. It carries out the reaction tRNA(Pro) + L-proline + ATP = L-prolyl-tRNA(Pro) + AMP + diphosphate. Catalyzes the attachment of proline to tRNA(Pro) in a two-step reaction: proline is first activated by ATP to form Pro-AMP and then transferred to the acceptor end of tRNA(Pro). As ProRS can inadvertently accommodate and process non-cognate amino acids such as alanine and cysteine, to avoid such errors it has two additional distinct editing activities against alanine. One activity is designated as 'pretransfer' editing and involves the tRNA(Pro)-independent hydrolysis of activated Ala-AMP. The other activity is designated 'posttransfer' editing and involves deacylation of mischarged Ala-tRNA(Pro). The misacylated Cys-tRNA(Pro) is not edited by ProRS. This chain is Proline--tRNA ligase, found in Ralstonia pickettii (strain 12J).